The chain runs to 341 residues: Galactofuranose transporter permease protein YtfT (341 aa).

The Cytoplasmic segment spans residues methionine 1–leucine 25. The helical transmembrane segment at valine 26–valine 46 threads the bilayer. Residues leucine 47–proline 65 lie on the Periplasmic side of the membrane. The next 2 membrane-spanning stretches (helical) occupy residues valine 66–valine 86 and glycine 87–leucine 107. Proline 108 is a topological domain (periplasmic). Residues isoleucine 109–valine 129 traverse the membrane as a helical segment. Over alanine 130 to proline 136 the chain is Cytoplasmic. A helical membrane pass occupies residues phenylalanine 137–glycine 157. Residues glutamine 158–serine 174 lie on the Periplasmic side of the membrane. A helical membrane pass occupies residues leucine 175–leucine 195. Over threonine 196 to arginine 223 the chain is Cytoplasmic. Residues isoleucine 224 to valine 244 traverse the membrane as a helical segment. The Periplasmic portion of the chain corresponds to alanine 245–asparagine 255. A helical membrane pass occupies residues alanine 256–methionine 276. At glycine 277–asparagine 281 the chain is on the cytoplasmic side. Transmembrane regions (helical) follow at residues leucine 282 to serine 302 and glycine 303 to valine 323. Topologically, residues glutamine 324–threonine 341 are cytoplasmic.

It belongs to the binding-protein-dependent transport system permease family. AraH/RbsC subfamily. As to quaternary structure, the complex is composed of two ATP-binding proteins (YtfR), two transmembrane proteins (YtfT and YjfF) and a solute-binding protein (YtfQ).

Its subcellular location is the cell inner membrane. In terms of biological role, part of the ABC transporter complex YtfQRT-YjfF involved in galactofuranose transport. Probably responsible for the translocation of the substrate across the membrane. In Escherichia coli (strain K12), this protein is Galactofuranose transporter permease protein YtfT (ytfT).